The primary structure comprises 36 residues: Adenylate kinase (36 aa).

ATP is bound at residue 10 to 15 (GAGKGT). An NMP region spans residues 30–36 (ATGDLFR). Residues Thr31 and Arg36 each contribute to the AMP site.

Belongs to the adenylate kinase family. As to quaternary structure, monomer.

Its subcellular location is the cytoplasm. It catalyses the reaction AMP + ATP = 2 ADP. It functions in the pathway purine metabolism; AMP biosynthesis via salvage pathway; AMP from ADP: step 1/1. In terms of biological role, catalyzes the reversible transfer of the terminal phosphate group between ATP and AMP. Plays an important role in cellular energy homeostasis and in adenine nucleotide metabolism. In Streptomyces griseus, this protein is Adenylate kinase (adk).